A 318-amino-acid polypeptide reads, in one-letter code: Thymidylate synthase (318 aa).

DUMP-binding positions include Arg-25 and 180–181; that span reads RR. The active-site Nucleophile is the Cys-200. DUMP is bound by residues 220-223, Asn-231, and 261-263; these read RSGD and HIY. A (6R)-5,10-methylene-5,6,7,8-tetrahydrofolate-binding site is contributed by Asp-223. Residue Ala-317 participates in (6R)-5,10-methylene-5,6,7,8-tetrahydrofolate binding.

Belongs to the thymidylate synthase family. Bacterial-type ThyA subfamily. In terms of assembly, homodimer.

It localises to the cytoplasm. It carries out the reaction dUMP + (6R)-5,10-methylene-5,6,7,8-tetrahydrofolate = 7,8-dihydrofolate + dTMP. It participates in pyrimidine metabolism; dTTP biosynthesis. Catalyzes the reductive methylation of 2'-deoxyuridine-5'-monophosphate (dUMP) to 2'-deoxythymidine-5'-monophosphate (dTMP) while utilizing 5,10-methylenetetrahydrofolate (mTHF) as the methyl donor and reductant in the reaction, yielding dihydrofolate (DHF) as a by-product. This enzymatic reaction provides an intracellular de novo source of dTMP, an essential precursor for DNA biosynthesis. This Lactobacillus gasseri (strain ATCC 33323 / DSM 20243 / BCRC 14619 / CIP 102991 / JCM 1131 / KCTC 3163 / NCIMB 11718 / NCTC 13722 / AM63) protein is Thymidylate synthase.